The sequence spans 365 residues: Elongation factor Tu (365 aa).

Residues 1 to 7 (HVDHGKT), 62 to 66 (DCPGH), and 117 to 120 (NKCD) contribute to the GTP site. The tr-type G domain occupies 1–185 (HVDHGKTTLT…TLDSYIPTPE (185 aa)). A Mg(2+)-binding site is contributed by T7.

The protein belongs to the TRAFAC class translation factor GTPase superfamily. Classic translation factor GTPase family. EF-Tu/EF-1A subfamily. In terms of assembly, monomer.

Its subcellular location is the cytoplasm. The enzyme catalyses GTP + H2O = GDP + phosphate + H(+). Its function is as follows. GTP hydrolase that promotes the GTP-dependent binding of aminoacyl-tRNA to the A-site of ribosomes during protein biosynthesis. This Buchnera aphidicola subsp. Schlechtendalia chinensis protein is Elongation factor Tu.